Reading from the N-terminus, the 217-residue chain is Proteasome subunit beta type-9 (217 aa).

A propeptide spans 1–18 (MLDESLEPGWLSEEVKTG) (removed in mature form). Threonine 19 functions as the Nucleophile in the catalytic mechanism.

It belongs to the peptidase T1B family. As to quaternary structure, the 26S proteasome consists of a 20S proteasome core and two 19S regulatory subunits. The 20S proteasome core is composed of 28 subunits that are arranged in four stacked rings, resulting in a barrel-shaped structure. The two end rings are each formed by seven alpha subunits, and the two central rings are each formed by seven beta subunits. The catalytic chamber with the active sites is on the inside of the barrel. Component of the immunoproteasome, where it displaces the equivalent housekeeping subunit PSMB6. In terms of processing, autocleaved. The resulting N-terminal Thr residue of the mature subunit is responsible for the nucleophile proteolytic activity.

It localises to the cytoplasm. The protein resides in the nucleus. It carries out the reaction Cleavage of peptide bonds with very broad specificity.. Functionally, the proteasome is a multicatalytic proteinase complex which is characterized by its ability to cleave peptides with Arg, Phe, Tyr, Leu, and Glu adjacent to the leaving group at neutral or slightly basic pH. The proteasome has an ATP-dependent proteolytic activity. This subunit is involved in antigen processing to generate class I binding peptides. This chain is Proteasome subunit beta type-9 (psmb9), found in Oncorhynchus mykiss (Rainbow trout).